Here is a 330-residue protein sequence, read N- to C-terminus: Small ribosomal subunit protein uS15m (330 aa).

Belongs to the universal ribosomal protein uS15 family. In terms of assembly, component of the mitochondrial ribosome small subunit (28S) which comprises a 12S rRNA and about 30 distinct proteins.

It is found in the mitochondrion. This chain is Small ribosomal subunit protein uS15m (mrps-15), found in Caenorhabditis elegans.